The sequence spans 357 residues: Glycerol-1-phosphate dehydrogenase [NAD(P)+] (357 aa).

Residues 104 to 108 (GKTID) and 126 to 129 (TAAS) each bind NAD(+). D131 contributes to the substrate binding site. S135 provides a ligand contact to NAD(+). D178 contacts substrate. D178 and H258 together coordinate Zn(2+). H262 contacts substrate. H274 is a binding site for Zn(2+).

The protein belongs to the glycerol-1-phosphate dehydrogenase family. Zn(2+) serves as cofactor.

The protein localises to the cytoplasm. The enzyme catalyses sn-glycerol 1-phosphate + NAD(+) = dihydroxyacetone phosphate + NADH + H(+). It carries out the reaction sn-glycerol 1-phosphate + NADP(+) = dihydroxyacetone phosphate + NADPH + H(+). It participates in membrane lipid metabolism; glycerophospholipid metabolism. Functionally, catalyzes the NAD(P)H-dependent reduction of dihydroxyacetonephosphate (DHAP or glycerone phosphate) to glycerol 1-phosphate (G1P). The G1P thus generated is used as the glycerophosphate backbone of phospholipids in the cellular membranes of Archaea. The sequence is that of Glycerol-1-phosphate dehydrogenase [NAD(P)+] from Methanococcoides burtonii (strain DSM 6242 / NBRC 107633 / OCM 468 / ACE-M).